The chain runs to 77 residues: Acyl carrier protein (77 aa).

The 77-residue stretch at 1 to 77 (MSVEAKVKKI…DAIEYIRKKS (77 aa)) folds into the Carrier domain. Serine 37 carries the O-(pantetheine 4'-phosphoryl)serine modification.

Belongs to the acyl carrier protein (ACP) family. In terms of processing, 4'-phosphopantetheine is transferred from CoA to a specific serine of apo-ACP by AcpS. This modification is essential for activity because fatty acids are bound in thioester linkage to the sulfhydryl of the prosthetic group.

The protein localises to the cytoplasm. Its pathway is lipid metabolism; fatty acid biosynthesis. Its function is as follows. Carrier of the growing fatty acid chain in fatty acid biosynthesis. In Desulforapulum autotrophicum (strain ATCC 43914 / DSM 3382 / VKM B-1955 / HRM2) (Desulfobacterium autotrophicum), this protein is Acyl carrier protein.